The chain runs to 84 residues: Toxin To7 (84 aa).

The signal sequence occupies residues 1-20 (MSIFPIVLALLLIGLEETEA). Residues 21–83 (LDGYPLSKIN…KMYPGSSPCY (63 aa)) enclose the LCN-type CS-alpha/beta domain. Disulfide bonds link cysteine 32–cysteine 82, cysteine 36–cysteine 59, cysteine 42–cysteine 64, and cysteine 46–cysteine 66.

In terms of tissue distribution, expressed by the venom gland.

It localises to the secreted. Inhibits voltage-gated sodium channels (Nav). This Tityus obscurus (Amazonian scorpion) protein is Toxin To7.